A 1390-amino-acid polypeptide reads, in one-letter code: MKAPAVLAPGILVLLFTLVQRSNGECKEALAKSEMNVNMKYQLPNFTAETPIQNVILHEHHIFLGATNYIYVLNEEDLQKVAEYKTGPVLEHPDCFPCQDCSSKANLSGGVWKDNINMALVVDTYYDDQLISCGSVNRGTCQRHVFPHNHTADIQSEVHCIFSPQIEEPSQCPDCVVSALGAKVLSSVKDRFINFFVGNTINSSYFPDHPLHSISVRRLKETKDGFMFLTDQSYIDVLPEFRDSYPIKYVHAFESNNFIYFLTVQRETLDAQTFHTRIIRFCSINSGLHSYMEMPLECILTEKRKKRSTKKEVFNILQAAYVSKPGAQLARQIGASLNDDILFGVFAQSKPDSAEPMDRSAMCAFPIKYVNDFFNKIVNKNNVRCLQHFYGPNHEHCFNRTLLRNSSSCEARRDEYRTEFTTALQRVDLFMGQFSEVLLTSISTFIKGDLTIANLGTSEGRFMQVVVSRSGPSTPHVNFLLDSHPVSPEVIVEHTLNQNGYTLVVTGKKITKIPLNGLGCRHFQSCSQCLSAPPFVQCGWCHDKCVRSEECLSGTWTQQICLPAIYKVFPNSAPLEGGTRLTICGWDFGFRRNNKFDLKKTRVLLGNESCTLTLSESTMNTLKCTVGPAMNKHFNMSIIISNGHGTTQYSTFSYVDPVITSISPKYGPMAGGTLLTLTGNYLNSGNSRHISIGGKTCTLKSVSNSILECYTPAQTISTEFAVKLKIDLANRETSIFSYREDPIVYEIHPTKSFISGGSTITGVGKNLNSVSVPRMVINVHEAGRNFTVACQHRSNSEIICCTTPSLQQLNLQLPLKTKAFFMLDGILSKYFDLIYVHNPVFKPFEKPVMISMGNENVLEIKGNDIDPEAVKGEVLKVGNKSCENIHLHSEAVLCTVPNDLLKLNSELNIEWKQAISSTVLGKVIVQPDQNFTGLIAGVVSISIALLLLLGFFLWLKKRKQIKDLGSELVRYDARVHTPHLDRLVSARSVSPTTEMVSNESVDYRATFPEDQFPNSSQNGSCRQVQYPLTDMSPILTSGDSDISSPLLQNTVHIDLSALNPELVQAVQHVVIGPSSLIVHFNEVIGRGHFGCVYHGTLLDNDGKKIHCAVKSLNRITDIGEVSQFLTEGIIMKDFSHPNVLSLLGICLRSEGSPLVVLPYMKHGDLRNFIRNETHNPTVKDLIGFGLQVAKGMKYLASKKFVHRDLAARNCMLDEKFTVKVADFGLARDMYDKEYYSVHNKTGAKLPVKWMALESLQTQKFTTKSDVWSFGVLLWELMTRGAPPYPDVNTFDITVYLLQGRRLLQPEYCPDPLYEVMLKCWHPKAEMRPSFSELVSRISAIFSTFIGEHYVHVNATYVNVKCVAPYPSLLSSEDNADDEVDTRPASFWETS.

An N-terminal signal peptide occupies residues 1-24 (MKAPAVLAPGILVLLFTLVQRSNG). The Extracellular segment spans residues 25–932 (ECKEALAKSE…VIVQPDQNFT (908 aa)). The 489-residue stretch at 27 to 515 (KEALAKSEMN…TGKKITKIPL (489 aa)) folds into the Sema domain. A glycan (N-linked (GlcNAc...) asparagine) is linked at Asn45. 4 cysteine pairs are disulfide-bonded: Cys95–Cys101, Cys98–Cys160, Cys133–Cys141, and Cys172–Cys175. An N-linked (GlcNAc...) asparagine glycan is attached at Asn106. An N-linked (GlcNAc...) asparagine glycan is attached at Asn149. The N-linked (GlcNAc...) asparagine glycan is linked to Asn202. Disulfide bonds link Cys298/Cys363 and Cys385/Cys397. Residues Asn399 and Asn405 are each glycosylated (N-linked (GlcNAc...) asparagine). Disulfide bonds link Cys520–Cys538, Cys526–Cys561, Cys529–Cys545, and Cys541–Cys551. IPT/TIG domains are found at residues 563-655 (PAIY…FSYV), 657-739 (PVIT…FSYR), and 742-836 (PIVY…LIYV). O-linked (Man) threonine glycosylation is present at Thr582. 2 N-linked (GlcNAc...) asparagine glycosylation sites follow: Asn607 and Asn635. Residues Thr676 and Thr761 are each glycosylated (O-linked (Man) threonine). 3 N-linked (GlcNAc...) asparagine glycosylation sites follow: Asn785, Asn879, and Asn930. Residues 933-955 (GLIAGVVSISIALLLLLGFFLWL) traverse the membrane as a helical segment. Residues 956-1390 (KKRKQIKDLG…TRPASFWETS (435 aa)) are Cytoplasmic-facing. Phosphoserine is present on Ser966. Position 977 is a phosphothreonine (Thr977). Residues Ser990, Ser997, and Ser1000 each carry the phosphoserine modification. Tyr1003 carries the post-translational modification Phosphotyrosine. The region spanning 1078-1345 (VHFNEVIGRG…RISAIFSTFI (268 aa)) is the Protein kinase domain. ATP is bound by residues 1084 to 1092 (IGRGHFGCV) and Lys1110. Residue Asp1204 is the Proton acceptor of the active site. Residues 1212-1390 (LDEKFTVKVA…TRPASFWETS (179 aa)) form an interaction with RANBP9 region. A Phosphotyrosine modification is found at Tyr1230. A phosphotyrosine; by autocatalysis mark is found at Tyr1234 and Tyr1235. Thr1289 carries the phosphothreonine modification. The segment at 1320-1359 (WHPKAEMRPSFSELVSRISAIFSTFIGEHYVHVNATYVNV) is interaction with MUC20. A phosphotyrosine; by autocatalysis mark is found at Tyr1349 and Tyr1356. Tyr1365 carries the post-translational modification Phosphotyrosine.

This sequence belongs to the protein kinase superfamily. Tyr protein kinase family. In terms of assembly, heterodimer made of an alpha chain (50 kDa) and a beta chain (145 kDa) which are disulfide linked. Binds PLXNB1. Interacts when phosphorylated with downstream effectors including STAT3, PIK3R1, SRC, PCLG1, GRB2 and GAB1. Interacts with SPSB1, SPSB2 and SPSB4. Interacts with INPP5D/SHIP1. When phosphorylated at Tyr-1356, interacts with INPPL1/SHIP2. Interacts with RANBP9 and RANBP10, as well as SPSB1, SPSB2, SPSB3 and SPSB4. SPSB1 binding occurs in the presence and in the absence of HGF, however HGF treatment has a positive effect on this interaction. Interacts with MUC20; prevents interaction with GRB2 and suppresses hepatocyte growth factor-induced cell proliferation. Interacts with GRB10. Interacts with PTPN1 and PTPN2. Interacts with HSP90AA1 and HSP90AB1; the interaction suppresses MET kinase activity. Interacts with tensin TNS3. Interacts (when phosphorylated) with tensin TNS4 (via SH2 domain); the interaction increases MET protein stability by inhibiting MET endocytosis and subsequent lysosomal degradation. Autophosphorylated in response to ligand binding on Tyr-1234 and Tyr-1235 in the kinase domain leading to further phosphorylation of Tyr-1349 and Tyr-1356 in the C-terminal multifunctional docking site. Dephosphorylated by PTPRJ at Tyr-1349 and Tyr-1365. Dephosphorylated by PTPN1 and PTPN2. In terms of processing, ubiquitinated. Ubiquitination by CBL regulates the receptor stability and activity through proteasomal degradation. Post-translationally, O-mannosylation of IPT/TIG domains by TMEM260 is required for protein maturation. O-mannosylated residues are composed of single mannose glycans that are not elongated or modified.

It localises to the membrane. It carries out the reaction L-tyrosyl-[protein] + ATP = O-phospho-L-tyrosyl-[protein] + ADP + H(+). With respect to regulation, in its inactive state, the C-terminal tail interacts with the catalytic domain and inhibits the kinase activity. Upon ligand binding, the C-terminal tail is displaced and becomes phosphorylated, thus increasing the kinase activity. Receptor tyrosine kinase that transduces signals from the extracellular matrix into the cytoplasm by binding to hepatocyte growth factor/HGF ligand. Regulates many physiological processes including proliferation, scattering, morphogenesis and survival. Ligand binding at the cell surface induces autophosphorylation of MET on its intracellular domain that provides docking sites for downstream signaling molecules. Following activation by ligand, interacts with the PI3-kinase subunit PIK3R1, PLCG1, SRC, GRB2, STAT3 or the adapter GAB1. Recruitment of these downstream effectors by MET leads to the activation of several signaling cascades including the RAS-ERK, PI3 kinase-AKT, or PLCgamma-PKC. The RAS-ERK activation is associated with the morphogenetic effects while PI3K/AKT coordinates prosurvival effects. During embryonic development, MET signaling plays a role in gastrulation, development and migration of muscles and neuronal precursors, angiogenesis and kidney formation. In adults, participates in wound healing as well as organ regeneration and tissue remodeling. Also promotes differentiation and proliferation of hematopoietic cells. The polypeptide is Hepatocyte growth factor receptor (MET) (Pan troglodytes (Chimpanzee)).